A 65-amino-acid polypeptide reads, in one-letter code: Alpha-conotoxin BnIA (65 aa).

An N-terminal signal peptide occupies residues 1–21; sequence MGMRMMFTMFLLVVLATTVVS. Residues 22-48 constitute a propeptide that is removed on maturation; sequence FASDRASDGRNAAAKDKASDLVALTVK. 2 cysteine pairs are disulfide-bonded: Cys50–Cys56 and Cys51–Cys64. Residues 52–54 are ser-Xaa-Pro motif, crucial for potent interaction with nAChR; sequence SHP. A Cysteine amide modification is found at Cys64.

This sequence belongs to the conotoxin A superfamily. In terms of tissue distribution, expressed by the venom duct.

It localises to the secreted. Functionally, alpha-conotoxins act on postsynaptic membranes, they bind to the nicotinic acetylcholine receptors (nAChR) and thus inhibit them. This toxin inhibits acetylcholine-evoked currents reversibly in oocytes expressing the human alpha-7/CHRNA7 nAChR, and blocks nerve-evoked skeletal muscle contractions in isolated mouse neuromuscular preparations, but with a very low affinity. In Conus bandanus (Banded marble cone), this protein is Alpha-conotoxin BnIA.